Here is a 427-residue protein sequence, read N- to C-terminus: tRNA(Ile)-lysidine synthase (427 aa).

ATP is bound at residue S29–S34.

The protein belongs to the tRNA(Ile)-lysidine synthase family.

The protein resides in the cytoplasm. It carries out the reaction cytidine(34) in tRNA(Ile2) + L-lysine + ATP = lysidine(34) in tRNA(Ile2) + AMP + diphosphate + H(+). Its function is as follows. Ligates lysine onto the cytidine present at position 34 of the AUA codon-specific tRNA(Ile) that contains the anticodon CAU, in an ATP-dependent manner. Cytidine is converted to lysidine, thus changing the amino acid specificity of the tRNA from methionine to isoleucine. The chain is tRNA(Ile)-lysidine synthase from Thermosipho africanus (strain TCF52B).